The primary structure comprises 344 residues: Tripartite motif-containing protein 44 (344 aa).

The interval 69–165 is disordered; that stretch reads PPASGDDALP…ETEAESEFDP (97 aa). Residues 88–165 show a composition bias toward acidic residues; the sequence is EGEVESEVGE…ETEAESEFDP (78 aa). The B box-type zinc-finger motif lies at 174-215; the sequence is VAKRKCPDHGLDLSTYCQEDRQLICVLCPVIGAHRGHQLSTL. The Zn(2+) site is built by Cys179, His182, Cys201, and His207. Residues 290 to 325 adopt a coiled-coil conformation; the sequence is AHVTEILADIQSHMDRLMTQMAQAKEQLDTSNESAE. The interval 309–344 is disordered; that stretch reads QMAQAKEQLDTSNESAEPKAEGDEEGPSGASEEEDT. Residues 330–344 are compositionally biased toward acidic residues; it reads GDEEGPSGASEEEDT. Phosphoserine occurs at positions 336 and 339.

As to quaternary structure, interacts (via coiled coil) with TRIM17 (via coiled coil).

Functionally, may play a role in the process of differentiation and maturation of neuronal cells. May regulate the activity of TRIM17. Is a negative regulator of PAX6 expression. The chain is Tripartite motif-containing protein 44 (Trim44) from Rattus norvegicus (Rat).